Here is a 421-residue protein sequence, read N- to C-terminus: Tryptophan synthase beta chain (421 aa).

Lysine 110 is modified (N6-(pyridoxal phosphate)lysine).

The protein belongs to the TrpB family. Tetramer of two alpha and two beta chains. The cofactor is pyridoxal 5'-phosphate.

The catalysed reaction is (1S,2R)-1-C-(indol-3-yl)glycerol 3-phosphate + L-serine = D-glyceraldehyde 3-phosphate + L-tryptophan + H2O. The protein operates within amino-acid biosynthesis; L-tryptophan biosynthesis; L-tryptophan from chorismate: step 5/5. Its function is as follows. The beta subunit is responsible for the synthesis of L-tryptophan from indole and L-serine. The sequence is that of Tryptophan synthase beta chain (trpB) from Mycobacterium intracellulare.